The primary structure comprises 681 residues: Pescadillo homolog (681 aa).

Residues 350–469 (TAGALFAPFT…KLLRPDLYAP (120 aa)) enclose the BRCT domain. The interval 489–681 (DPRASLAEQE…RRKLEKGAEK (193 aa)) is disordered. A coiled-coil region spans residues 491–527 (RASLAEQEEEGEAEIAAEEEEEDSDEEMEEATDGKKV). The span at 496 to 521 (EQEEEGEAEIAAEEEEEDSDEEMEEA) shows a compositional bias: acidic residues. Residues 522–533 (TDGKKVDAKAED) are compositionally biased toward basic and acidic residues. Composition is skewed to acidic residues over residues 534-546 (SAEEENEDEDDSV) and 554-586 (GTDDDEDESEEEMEDEFGGFEEEAASESEDEEE). The stretch at 574-681 (EEEAASESED…RRKLEKGAEK (108 aa)) forms a coiled coil. Residues 587 to 597 (SARTQHQKELE) are compositionally biased toward basic and acidic residues. Basic residues predominate over residues 617–629 (KKSSQAKKVASKK). A compositionally biased stretch (basic and acidic residues) spans 630–640 (RKEEEELERQK).

The protein belongs to the pescadillo family. In terms of assembly, component of the NOP7 complex, composed of erb1, nop7 and ytm1. The complex is held together by erb1, which interacts with nop7 via its N-terminal domain and with ytm1 via a high-affinity interaction between the seven-bladed beta-propeller domains of the 2 proteins. The NOP7 complex associates with the 66S pre-ribosome.

Its subcellular location is the nucleus. It localises to the nucleolus. It is found in the nucleoplasm. Functionally, component of the NOP7 complex, which is required for maturation of the 25S and 5.8S ribosomal RNAs and formation of the 60S ribosome. The sequence is that of Pescadillo homolog (nop7) from Aspergillus oryzae (strain ATCC 42149 / RIB 40) (Yellow koji mold).